Here is a 225-residue protein sequence, read N- to C-terminus: C-reactive protein (225 aa).

The signal sequence occupies residues 1-19 (MEKLLWCSLVMIGFSQAFA). Residue Gln20 is modified to Pyrrolidone carboxylic acid. A Pentraxin (PTX) domain is found at 24-225 (SKTAFVFPKE…DVFIKPQLWP (202 aa)). Cys55 and Cys116 form a disulfide bridge. Ca(2+) contacts are provided by Asn80, Glu157, Gln158, Asp159, and Gln169.

The protein belongs to the pentraxin family. In terms of assembly, homopentamer. Pentraxin (or pentaxin) have a discoid arrangement of 5 non-covalently bound subunits. Interacts with FCN1; may regulate monocyte activation by FCN1. Ca(2+) serves as cofactor. Found in plasma.

The protein resides in the secreted. Displays several functions associated with host defense: it promotes agglutination, bacterial capsular swelling, phagocytosis and complement fixation through its calcium-dependent binding to phosphorylcholine. Can interact with DNA and histones and may scavenge nuclear material released from damaged circulating cells. This Mesocricetus auratus (Golden hamster) protein is C-reactive protein (CRP).